The primary structure comprises 480 residues: MKNGMLALGMTAADVPDNFLWGAASAAYQVEGATNKDGKGRSVWDYYLDEKHLAGPGISGALRLTFTDRDQYLKDIQLFKELGLNSYRFSHRLDTYYPDGQGPVNLRAVAHYRQFITDLEAAGIKPLVTLYHWDMPESLSAAGGWENRESVEWFQRYAEVIFANFSDQVDQFVLINEPTVEVATKIMAEKRLKGEELTLPPIVPAGSYLETSLKSYNHILLASAAAAESFKVKGYKGRLGIALPFFPVLTTENASDEDKADARLVDGILNRWFLDAMYKGNYPADVLKLAADRHLNIDVQPGDAERIHDAGLGFLGINYYAPFFIRHQKNASEVYSPEIIFPKNEKLAFNGAVRPDQFSALLERVRDEYGNPPVIITENGAGFEGEDQLTNGKVNDVNRCLYLVDHIHAMRESIARGANVQGYYVWSSHDNLEWLSGYKSRFGMIYVDYDTQKRTPKLSAEIYGKIIRGENISDVDCKSD.

Glutamate 177 acts as the Proton donor in catalysis. Catalysis depends on glutamate 378, which acts as the Nucleophile.

Belongs to the glycosyl hydrolase 1 family.

The catalysed reaction is Hydrolysis of terminal, non-reducing beta-D-glucosyl residues with release of beta-D-glucose.. This chain is Beta-glucosidase A (bglA), found in Enterobacter agglomerans (Erwinia herbicola).